Here is a 122-residue protein sequence, read N- to C-terminus: UPF0231 protein VV1_1657 (122 aa).

This sequence belongs to the UPF0231 family.

The protein is UPF0231 protein VV1_1657 of Vibrio vulnificus (strain CMCP6).